A 353-amino-acid chain; its full sequence is UPF0283 membrane protein YcjF (353 aa).

Residues 1–69 (MTEPLKPRID…LRPKRSLWRK (69 aa)) are Periplasmic-facing. A helical membrane pass occupies residues 70–90 (MVMGGLALFGASVVGQGVQWT). Topologically, residues 91–99 (MNAWQTQDW) are cytoplasmic. Residues 100–120 (VALGGCAAGALIIGAGVGSVV) traverse the membrane as a helical segment. At 121-212 (TEWRRLWRLR…ARREISRSAA (92 aa)) the chain is on the periplasmic side. The helical transmembrane segment at 213 to 233 (ESTLMIAVSPLALVDMAFIAW) threads the bilayer. Topologically, residues 234–353 (RNLRLINRIA…LQKGKTPSEK (120 aa)) are cytoplasmic.

It belongs to the UPF0283 family.

It is found in the cell inner membrane. In Escherichia coli O157:H7, this protein is UPF0283 membrane protein YcjF (ycjF).